Consider the following 254-residue polypeptide: Small ribosomal subunit protein uS2 (254 aa).

Basic and acidic residues predominate over residues 228–248; sequence RKERKGQDAEEELKKASEPKA. Positions 228-254 are disordered; sequence RKERKGQDAEEELKKASEPKAAEAAAE.

It belongs to the universal ribosomal protein uS2 family.

In Nitratidesulfovibrio vulgaris (strain ATCC 29579 / DSM 644 / CCUG 34227 / NCIMB 8303 / VKM B-1760 / Hildenborough) (Desulfovibrio vulgaris), this protein is Small ribosomal subunit protein uS2.